The following is a 696-amino-acid chain: Tegument protein UL47 (696 aa).

2 stretches are compositionally biased toward basic residues: residues M1–T15 and R70–S81. 2 disordered regions span residues M1–G39 and S54–P130. Residues E57–A84 are RNA-binding. Residues R70–A84 carry the Nuclear localization signal motif. A compositionally biased stretch (low complexity) spans A87–S103. Positions S650–E673 match the Nuclear export signal motif.

The protein belongs to the alphaherpesvirinae HHV-1 UL47 family. Interacts with US3 kinase. Interacts with UL31 and UL34; these interactions seem important for efficient virion nuclear egress. Interacts with UL41/VHS. In terms of processing, phosphorylated by US3. This phosphorylation is required for proper nuclear localization.

Its subcellular location is the virion tegument. It is found in the host nucleus. The protein resides in the host cytoplasm. In terms of biological role, tegument protein that can bind to various RNA transcripts. Plays a role in the attenuation of selective viral and cellular mRNA degradation by modulating the activity of host shutoff RNase UL41/VHS. Also plays a role in the primary envelopment of virions in the perinuclear space, probably by interacting with two nuclear egress proteins UL31 and UL34. The sequence is that of Tegument protein UL47 from Human herpesvirus 2 (strain HG52) (HHV-2).